Here is an 873-residue protein sequence, read N- to C-terminus: Zinc fingers and homeoboxes protein 1 (873 aa).

A disordered region spans residues 24 to 63; sequence LISDLDEGPPVLTPVENTRAESISSDEEVHESVDSDNQQN. T36 carries the phosphothreonine modification. S45, S47, and S48 each carry phosphoserine. C2H2-type zinc fingers lie at residues 70–93 and 102–125; these read YECKYCTFQTPDLNMFTFHVDSEH and YVCVECNFLTKRYDALSEHNLKYH. K159 is covalently cross-linked (Glycyl lysine isopeptide (Lys-Gly) (interchain with G-Cter in SUMO2)). Position 202 is a phosphoserine (S202). Positions 202 to 236 are disordered; the sequence is SVEDVPEEKENEIKPDREEIVENPSSSASESNTST. The segment covering 212-221 has biased composition (basic and acidic residues); it reads NEIKPDREEI. The span at 223 to 236 shows a compositional bias: low complexity; it reads ENPSSSASESNTST. Residues 272–432 are required for dimerization; that stretch reads NSNLIPKVLI…QNNIQKSQVP (161 aa). A required for interaction with NFYA region spans residues 272–564; the sequence is NSNLIPKVLI…AQPKQSWNPF (293 aa). The segment at residues 284–346 is a DNA-binding region (homeobox 1); that stretch reads NSIPTYNAAL…LKHGVSWTPE (63 aa). Residues K441, K454, K485, and K629 each participate in a glycyl lysine isopeptide (Lys-Gly) (interchain with G-Cter in SUMO2) cross-link. 2 consecutive DNA-binding regions (homeobox) follow at residues 464-526 and 569-630; these read SFGI…KSNQ and PQKF…EEKM. 2 disordered regions span residues 626-667 and 732-770; these read KEEK…ICKK and SSMNGLSSLRKRGRGRPKGRGRGRPRGRPRGSKRINNWD. S648 bears the Phosphoserine mark. The segment at residues 660-722 is a DNA-binding region (homeobox 4); that stretch reads STGKICKKTP…YAWKNGNLKW (63 aa). The tract at residues 734–768 is required for nuclear localization; that stretch reads MNGLSSLRKRGRGRPKGRGRGRPRGRPRGSKRINN. Positions 740 to 764 are enriched in basic residues; the sequence is LRKRGRGRPKGRGRGRPRGRPRGSK. Residue S774 is modified to Phosphoserine. Residues 777-832 constitute a DNA-binding region (homeobox 5); the sequence is KFKTGTAILKDYYLKHKFLNEQDLDELVNKSHMGYEQVREWFAERQRRSELGIELF. The segment at 829–873 is disordered; sequence IELFEENEEEDEVIDDQEEDEEETDDSDTWEPPRHVKRKLSKSDD. Acidic residues predominate over residues 831 to 857; that stretch reads LFEENEEEDEVIDDQEEDEEETDDSDT. The interval 831–873 is required for repressor activity; the sequence is LFEENEEEDEVIDDQEEDEEETDDSDTWEPPRHVKRKLSKSDD. Over residues 863–873 the composition is skewed to basic residues; that stretch reads HVKRKLSKSDD.

Belongs to the ZHX family. In terms of assembly, forms homodimers. Heterodimer (via HD1 domain) with ZHX2 (via HD1 domain). Also forms a heterodimer with ZHX3 which is a prerequisite for repressor activity. Interacts with ATF7IP and NFYA. Interacts (via homeobox domains) with DNMT3B (via PWWP domain). As to expression, ubiquitously expressed. Expressed in podocytes.

The protein resides in the nucleus. Acts as a transcriptional repressor. Increases DNMT3B-mediated repressive transcriptional activity when DNMT3B is tethered to DNA. May link molecule between DNMT3B and other co-repressor proteins. This chain is Zinc fingers and homeoboxes protein 1 (ZHX1), found in Homo sapiens (Human).